Consider the following 1163-residue polypeptide: Carbamoyl phosphate synthase large chain (1163 aa).

The carboxyphosphate synthetic domain stretch occupies residues 1–456 (MPKRQDIKSI…SLQKALRGLE (456 aa)). Arginine 129 contacts ATP. Positions 148–170 (LANATDIKDHDRKSHEAERSALK) are disordered. The span at 153–170 (DIKDHDRKSHEAERSALK) shows a compositional bias: basic and acidic residues. Positions 185-381 (LENQWNLGEG…IAKIAAKLAV (197 aa)) constitute an ATP-grasp 1 domain. 11 residues coordinate ATP: arginine 222, glycine 228, glycine 229, glutamate 261, valine 263, glutamate 268, glycine 294, valine 295, histidine 296, glutamine 338, and glutamate 352. 3 residues coordinate Mg(2+): glutamine 338, glutamate 352, and asparagine 354. Mn(2+)-binding residues include glutamine 338, glutamate 352, and asparagine 354. The oligomerization domain stretch occupies residues 457–614 (TGLTGLDEIE…PFVGAARSEA (158 aa)). The tract at residues 615-1026 (QVSDRKKVVI…AFAKSQLGAG (412 aa)) is carbamoyl phosphate synthetic domain. The 213-residue stretch at 743 to 955 (QKLLMKLDLN…IAKIAARVMA (213 aa)) folds into the ATP-grasp 2 domain. ATP-binding residues include arginine 779, serine 839, leucine 841, glutamate 846, glycine 871, isoleucine 872, histidine 873, serine 874, glutamine 914, and glutamate 926. Mg(2+) contacts are provided by glutamine 914, glutamate 926, and asparagine 928. Glutamine 914, glutamate 926, and asparagine 928 together coordinate Mn(2+). The 137-residue stretch at 1027–1163 (VDLPRDGTVF…VRPLQSYFET (137 aa)) folds into the MGS-like domain. The interval 1027 to 1163 (VDLPRDGTVF…VRPLQSYFET (137 aa)) is allosteric domain.

It belongs to the CarB family. As to quaternary structure, composed of two chains; the small (or glutamine) chain promotes the hydrolysis of glutamine to ammonia, which is used by the large (or ammonia) chain to synthesize carbamoyl phosphate. Tetramer of heterodimers (alpha,beta)4. It depends on Mg(2+) as a cofactor. The cofactor is Mn(2+).

It catalyses the reaction hydrogencarbonate + L-glutamine + 2 ATP + H2O = carbamoyl phosphate + L-glutamate + 2 ADP + phosphate + 2 H(+). It carries out the reaction hydrogencarbonate + NH4(+) + 2 ATP = carbamoyl phosphate + 2 ADP + phosphate + 2 H(+). It functions in the pathway amino-acid biosynthesis; L-arginine biosynthesis; carbamoyl phosphate from bicarbonate: step 1/1. It participates in pyrimidine metabolism; UMP biosynthesis via de novo pathway; (S)-dihydroorotate from bicarbonate: step 1/3. Its function is as follows. Large subunit of the glutamine-dependent carbamoyl phosphate synthetase (CPSase). CPSase catalyzes the formation of carbamoyl phosphate from the ammonia moiety of glutamine, carbonate, and phosphate donated by ATP, constituting the first step of 2 biosynthetic pathways, one leading to arginine and/or urea and the other to pyrimidine nucleotides. The large subunit (synthetase) binds the substrates ammonia (free or transferred from glutamine from the small subunit), hydrogencarbonate and ATP and carries out an ATP-coupled ligase reaction, activating hydrogencarbonate by forming carboxy phosphate which reacts with ammonia to form carbamoyl phosphate. This Rhizobium meliloti (strain 1021) (Ensifer meliloti) protein is Carbamoyl phosphate synthase large chain.